A 559-amino-acid polypeptide reads, in one-letter code: Membrane protein insertase YidC (559 aa).

A helical transmembrane segment spans residues T6–H26. The interval G34–P80 is disordered. Low complexity predominate over residues A42–P80. A run of 4 helical transmembrane segments spans residues L367 to Y387, L441 to V461, P480 to P500, and V510 to V530.

Belongs to the OXA1/ALB3/YidC family. Type 1 subfamily. In terms of assembly, interacts with the Sec translocase complex via SecD. Specifically interacts with transmembrane segments of nascent integral membrane proteins during membrane integration.

It localises to the cell inner membrane. Its function is as follows. Required for the insertion and/or proper folding and/or complex formation of integral membrane proteins into the membrane. Involved in integration of membrane proteins that insert both dependently and independently of the Sec translocase complex, as well as at least some lipoproteins. Aids folding of multispanning membrane proteins. The chain is Membrane protein insertase YidC from Bordetella avium (strain 197N).